Here is a 412-residue protein sequence, read N- to C-terminus: Probable serine/threonine-protein kinase PBL4 (412 aa).

Gly-2 carries N-myristoyl glycine lipidation. Cys-4 carries the S-palmitoyl cysteine lipid modification. Residues 14–40 are disordered; sequence RESPYRGSSRISAKRSQSSRLSSLTIQ. Residues 21–40 are compositionally biased toward low complexity; it reads SSRISAKRSQSSRLSSLTIQ. Thr-72 is subject to Phosphothreonine. The Protein kinase domain maps to 83–369; sequence FRPDSVIGEG…STLEELEMTL (287 aa). ATP is bound by residues 89–97 and Lys-121; that span reads IGEGGFGYV. The residue at position 167 (Tyr-167) is a Phosphotyrosine. The active-site Proton acceptor is the Asp-215. A phosphoserine mark is found at Ser-219 and Ser-249. 2 positions are modified to phosphothreonine: Thr-250 and Thr-255. Phosphotyrosine is present on Tyr-263.

The protein belongs to the protein kinase superfamily. Ser/Thr protein kinase family.

It is found in the cell membrane. It catalyses the reaction L-seryl-[protein] + ATP = O-phospho-L-seryl-[protein] + ADP + H(+). The catalysed reaction is L-threonyl-[protein] + ATP = O-phospho-L-threonyl-[protein] + ADP + H(+). Its function is as follows. May be involved in plant defense signaling. This chain is Probable serine/threonine-protein kinase PBL4, found in Arabidopsis thaliana (Mouse-ear cress).